Here is a 471-residue protein sequence, read N- to C-terminus: Anthranilate 1,2-dioxygenase large subunit (471 aa).

Positions 52 to 160 (IYACHESEIP…IASYRGFVFV (109 aa)) constitute a Rieske domain. Residues cysteine 93, histidine 95, cysteine 113, and histidine 116 each contribute to the [2Fe-2S] cluster site. Residues histidine 220, histidine 225, and aspartate 379 each contribute to the Fe cation site.

Belongs to the bacterial ring-hydroxylating dioxygenase alpha subunit family. The anthranilate dioxygenase (AntDO) multicomponent enzyme system is composed of an oxygenase component and a NADH:acceptor reductase component (AntC). The oxygenase component is a heterohexamer of 3 large (AntA) and 3 small (AntB) subunits. Requires Fe cation as cofactor. [2Fe-2S] cluster serves as cofactor.

It catalyses the reaction anthranilate + NADH + O2 + 3 H(+) = catechol + NH4(+) + CO2 + NAD(+). The catalysed reaction is anthranilate + NADPH + O2 + 3 H(+) = catechol + NH4(+) + CO2 + NADP(+). The protein operates within aromatic compound metabolism; anthranilate degradation via hydroxylation; catechol from anthranilate: step 1/1. Functionally, component of anthranilate dioxygenase multicomponent enzyme system which catalyzes the incorporation of both atoms of molecular oxygen into anthranilate to form catechol. This chain is Anthranilate 1,2-dioxygenase large subunit, found in Acinetobacter baylyi (strain ATCC 33305 / BD413 / ADP1).